Here is a 333-residue protein sequence, read N- to C-terminus: MDLRALLRKLGHGQSLNADEAYILGKGILTGTLSEVEIAASLTAMKVRGETAEEVAGFVKMAREFAVRVPLTVEAIDTAGTGGDGAGTINLSTAAAIVAAAAGAKVLKHGNRSASGMFGSADFMEAVGYNLEIGPERAARLVEEVGFAFVFAPKYHPAFARVAPVRRQLPFRTVFNIVGPLANPGLVKRQLIGVAETRLLDVISEAAARLGFEHAVVVHGSGVDEVTTEGETVVYEVRKGAAERYTISPGDLGAPRVPLPRASSKEEAVAKALAGLRGELLEASIAIAVNAAFALYVAGVVKDVKDGYELAINTIREGAAYRKLMEAVESSKT.

Residues Gly-80, 83-84, Thr-88, 90-93, 108-116, and Ser-120 each bind 5-phospho-alpha-D-ribose 1-diphosphate; these read GD, NLST, and KHGNRSASG. Position 80 (Gly-80) interacts with anthranilate. Ser-92 lines the Mg(2+) pocket. Anthranilate is bound at residue Asn-111. Position 166 (Arg-166) interacts with anthranilate. Mg(2+) contacts are provided by Asp-224 and Glu-225.

The protein belongs to the anthranilate phosphoribosyltransferase family. Homodimer. Mg(2+) serves as cofactor.

It catalyses the reaction N-(5-phospho-beta-D-ribosyl)anthranilate + diphosphate = 5-phospho-alpha-D-ribose 1-diphosphate + anthranilate. It functions in the pathway amino-acid biosynthesis; L-tryptophan biosynthesis; L-tryptophan from chorismate: step 2/5. Its function is as follows. Catalyzes the transfer of the phosphoribosyl group of 5-phosphorylribose-1-pyrophosphate (PRPP) to anthranilate to yield N-(5'-phosphoribosyl)-anthranilate (PRA). This is Anthranilate phosphoribosyltransferase from Pyrobaculum aerophilum (strain ATCC 51768 / DSM 7523 / JCM 9630 / CIP 104966 / NBRC 100827 / IM2).